Consider the following 339-residue polypeptide: N-acetylornithine carbamoyltransferase (339 aa).

Residues 49 to 52 (SMRT), Trp77, and Arg112 contribute to the carbamoyl phosphate site. Residue Glu144 participates in N(2)-acetyl-L-ornithine binding. Residue 148 to 151 (HPCQ) coordinates carbamoyl phosphate. 2 residues coordinate N(2)-acetyl-L-ornithine: Lys252 and Leu295. 294–295 (CL) provides a ligand contact to carbamoyl phosphate. N6-carboxylysine is present on Lys302. Arg322 is a carbamoyl phosphate binding site.

Belongs to the aspartate/ornithine carbamoyltransferase superfamily. AOTCase family. As to quaternary structure, homotrimer.

Its subcellular location is the cytoplasm. It catalyses the reaction N(2)-acetyl-L-ornithine + carbamoyl phosphate = N(2)-acetyl-L-citrulline + phosphate + H(+). Its pathway is amino-acid biosynthesis; L-arginine biosynthesis. Its activity is regulated as follows. Carboxylation at Lys-302 increases the catalytic activity of the enzyme. Is potently inhibited by N(alpha)-acetyl-N(delta)-phosphonoacetyl-L-ornithine (PALAO). Catalyzes the transfer of the carbamoyl group from carbamoyl phosphate to the delta-amino group of N(2)-acetyl-L-ornithine to produce N(2)-acetyl-L-citrulline. This is a step in an alternative arginine biosynthesis pathway. The enzyme has no activity with ornithine. The sequence is that of N-acetylornithine carbamoyltransferase from Xanthomonas campestris pv. campestris (strain ATCC 33913 / DSM 3586 / NCPPB 528 / LMG 568 / P 25).